Here is a 638-residue protein sequence, read N- to C-terminus: 1-deoxy-D-xylulose-5-phosphate synthase (638 aa).

Thiamine diphosphate is bound by residues His-79 and 120 to 122 (AHS). Asp-151 provides a ligand contact to Mg(2+). Residues 152–153 (GA), Asn-180, Tyr-289, and Glu-371 each bind thiamine diphosphate. Asn-180 is a binding site for Mg(2+).

Belongs to the transketolase family. DXPS subfamily. In terms of assembly, homodimer. Mg(2+) serves as cofactor. The cofactor is thiamine diphosphate.

It catalyses the reaction D-glyceraldehyde 3-phosphate + pyruvate + H(+) = 1-deoxy-D-xylulose 5-phosphate + CO2. It participates in metabolic intermediate biosynthesis; 1-deoxy-D-xylulose 5-phosphate biosynthesis; 1-deoxy-D-xylulose 5-phosphate from D-glyceraldehyde 3-phosphate and pyruvate: step 1/1. In terms of biological role, catalyzes the acyloin condensation reaction between C atoms 2 and 3 of pyruvate and glyceraldehyde 3-phosphate to yield 1-deoxy-D-xylulose-5-phosphate (DXP). This Rhizobium johnstonii (strain DSM 114642 / LMG 32736 / 3841) (Rhizobium leguminosarum bv. viciae) protein is 1-deoxy-D-xylulose-5-phosphate synthase.